The sequence spans 154 residues: Transcriptional repressor NrdR (154 aa).

A zinc finger spans residues 3 to 34 (CPFCGANDTKVIDSRLVAEGEQVRRRRECLAC). Residues 49–139 (PRLIKTDGSR…VYRRFQDLNE (91 aa)) form the ATP-cone domain.

This sequence belongs to the NrdR family. The cofactor is Zn(2+).

Functionally, negatively regulates transcription of bacterial ribonucleotide reductase nrd genes and operons by binding to NrdR-boxes. This chain is Transcriptional repressor NrdR, found in Pseudomonas fluorescens (strain ATCC BAA-477 / NRRL B-23932 / Pf-5).